We begin with the raw amino-acid sequence, 98 residues long: uncharacterized protein (98 aa).

This sequence belongs to the HHV-5 UL19 protein family.

This is an uncharacterized protein from Human cytomegalovirus (strain AD169) (HHV-5).